The sequence spans 190 residues: Translation initiation factor IF-3 (190 aa).

It belongs to the IF-3 family. Monomer.

Its subcellular location is the cytoplasm. Functionally, IF-3 binds to the 30S ribosomal subunit and shifts the equilibrium between 70S ribosomes and their 50S and 30S subunits in favor of the free subunits, thus enhancing the availability of 30S subunits on which protein synthesis initiation begins. The chain is Translation initiation factor IF-3 from Prochlorococcus marinus (strain MIT 9301).